Consider the following 2299-residue polypeptide: MAHVNGYVLSASASASASAPTSIPASVPASAPPSSSAPHAARHKLADHFIGRNRVENALAGPVKDFVKSHDGHTVITNVLIANNGIAAVKEMRSVRKWAYETFGDERAIKFTVMATPEDLAANADYIRMADHYVEVPGGTNNHNYANVELIVDIAERIDVHAVWAGWGHASENPRLPESLAASPKKIVFIGPPGSAMRSLGDKISSTIVAQHAKVPCIPWSGSGVDQVAIDADGIVTVDDEVYQKGCVQSWEEGLQKAKEIGFPVMIKASEGGGGKGIRKCEQEEGFEALYNAASSEIPGSPIFIMKLAGNARHLEVQLLADQYGNNISLFGRDCSVQRRHQKIIEEAPATVAKPEIFEAMEKAAVRLGRLVGYVSAGTVEYLYSSADNEFYFLELNPRLQVEHPTTEMVTGVNLPAAQLQIAMGLPLYRIHDIRLLYGVDQQAASEIDFDFSQESSFQTQQRPKPKGHTIACRITSEDPEDGFKPSSGIVHDLNFRSSSNVWGYFSVSNTSSIHSFSDSQFGHIFAYGKTRSASRKHMVVALKELSIRGDFRTTVEYLIKLLETPAFDNNVFTTGWLDELITKKLTVKRPDPVLVTICGAVCKAHLASEASFAEYQTSLEKGQVPPIDTLKTVFPIDFIYDSYYYRFTATRSSLDSYYLFINGSKCSVGVRNLSDGGLLVLLDGQSHTIYWKEEIAATRLSIDGKICLLEQENDPTQLRTSSPGKLVKYTIENGAHIKAGEAFAEVEVMKMYMPILAQEDGVVQLTKQPGTMLEPGDVLGILTLDDPARVKQAAQPFLNPLPDLGPPQVVGTKPAQRFRLLYNILTNILDGFDNQFVMASTLKELIDVLRDPELPYSEWSAQFSAFYSRIPQRLMASFTQIINRARASKSEFPAKSLSKALQRFREGDIVLLKSTLAPLIEVTERYDEGLKTHEFYVFSMLLEQYTAVERQFSSRTASDEEVILRLRDENKNNLFKVIQAILSHNKIRAKNNLILAILDEYKPTNLNAGNVAKYFFPAVRKITEIESRQVAKVALKAREVLIQCALPSVEERVVQMKHILQSSVVESRYSETGWEYREPVLEVLKELVDSKYTIFDVLPIFFTHQDVWVSRAALEVYVRRAYRAYSLKKVQYHNKSGDYPHVVSWDFMRGKMGASELDMEMSSQLSTPSTPATPPTPPYENGKQSKGVGSISDMSNLIENPDKEPTRKGVIVPVHDLEEAEEYLMHALQILPGIGERKKSHNGLLPDLANKRQPSILGPDGSDELSTVCNVAISDTENLDDKELLLCIQRIVNLYKNELLARCVRQLTFICGHKDGTYPGYYTFCGPEYDEDQSIRHSEPALAFQLERDRLSNFNIKPVFTTNRNIHIYEAISREMQSDKRYFTRAVIRQGRLQDKIPTTDYLLSEASRVINDTLDALEIIGNNSSDLNHIFLNFLPVFLSQPLEVEKALSGLLERFRSRLWRMRVTGIEIYITYIDLLTSVAHPLRVVITNTSGHVFQVEMYVEHRSEKDGKWVFQSISSTTKIGALHLQPASTPYPTKALEWLQPKRYKAHLMGTQYVYDFPELFRQAIHNSWTKIVCKYPSIGEKQPPADGYINYTEIILDDHDNLVEVVREPGTNTHGLVAWIMTARTVEYPRGRQFMIIANDITFRVGSFGPKENDFFYKCTEYARNLGIPRIYLCANSGARIGIAEELVPYFNVAWNNPENPEAGFKYLYLTPEDKKKFETQGVVTEEVIENRETRYKIIMIADAKDGHGMDCLKGSALIAAVTSRAYEDIFTITLVTCRSVAACHAHPLLGIGSYLVRLGQRAIQIEGHPMILTGAPAINKVLGQEVYTSNLQLGGTQIMYKNGVSHMTVNDDFEGVSKIVEWLAFVPEKKNTLVPIGPMIDPWDRDIVCSPSKQSYDVRCLIEGMETADGFQSGFFDRDSFVESLGGWAKTVVVGRARLGGIPMGIIAVETRTVENITPANPANGNSTEQIAIEAGGVWYPNSAFKTAQAIKDFNHGEQLPLMVLANWRGFSGGQKDMYDEILKYGSYILDAFIKYEQPVFVYIPPFAQVRGGSWVVLDPVLNQEFMEMYADEDARCGILEPEGVVNVRYRQDKQLETMARLDPEYRALRQKLADPSLSKEEMDDTKAKATAREQLLLPIYLQVSLQFADLHDRAGCMTAKHLIRTELKWRDARRFFYWRVRRRVLEEHILKRIATSSKNPRINRGRNLASLAAWTGIPNFSTADREVALWYEENQKLVDEKVENLKTEGVAYDVASLLRVDSKGGLKGVRHVLSMLSAKEREEALQFLN.

A compositionally biased stretch (low complexity) spans 21-39 (TSIPASVPASAPPSSSAPH). Positions 21-41 (TSIPASVPASAPPSSSAPHAA) are disordered. One can recognise a Biotin carboxylation domain in the interval 75-583 (VITNVLIANN…TTGWLDELIT (509 aa)). Residues 227–424 (QVAIDADGIV…LPAAQLQIAM (198 aa)) form the ATP-grasp 1 domain. Residue 258–315 (AKEIGFPVMIKASEGGGGKGIRKCEQEEGFEALYNAASSEIPGSPIFIMKLAGNARHL) participates in ATP binding. Mg(2+) is bound by residues glutamate 381, glutamate 395, and asparagine 397. Mn(2+) is bound by residues glutamate 381, glutamate 395, and asparagine 397. Positions 710–784 (LEQENDPTQL…EPGDVLGILT (75 aa)) constitute a Biotinyl-binding domain. Position 751 is an N6-biotinyllysine (lysine 751). Positions 1159–1208 (DMEMSSQLSTPSTPATPPTPPYENGKQSKGVGSISDMSNLIENPDKEPTR) are disordered. In terms of domain architecture, CoA carboxyltransferase N-terminal spans 1539–1887 (PTKALEWLQP…KKNTLVPIGP (349 aa)). The CoA carboxyltransferase C-terminal domain maps to 1891 to 2205 (PWDRDIVCSP…EEHILKRIAT (315 aa)).

Biotin serves as cofactor. The cofactor is Mg(2+). It depends on Mn(2+) as a cofactor.

It carries out the reaction hydrogencarbonate + acetyl-CoA + ATP = malonyl-CoA + ADP + phosphate + H(+). It catalyses the reaction N(6)-biotinyl-L-lysyl-[protein] + hydrogencarbonate + ATP = N(6)-carboxybiotinyl-L-lysyl-[protein] + ADP + phosphate + H(+). It functions in the pathway secondary metabolite biosynthesis. It participates in lipid metabolism; malonyl-CoA biosynthesis; malonyl-CoA from acetyl-CoA: step 1/1. Its function is as follows. Acetyl-CoA carboxylase; part of the gene cluster that mediates the biosynthesis of the dimeric xanthones cryptosporioptides. The pathway begins with the synthesis of atrochrysone thioester by the polyketide synthase dmx-nrPKS. The atrochrysone carboxyl ACP thioesterase dmxR1 then breaks the thioester bond and releases the atrochrysone carboxylic acid from dmx-nrPKS. Atrochrysone carboxylic acid is decarboxylated by the decarboxylase dmxR15, and oxidized by the anthrone oxygenase dmxR16 to yield emodin. Emodin is then reduced to emodin hydroquinone by the oxidoreductase dmxR7. A-ring reduction by the short chain dehydrogenase dmxR18, dehydration by the scytalone dehydratase-like protein dmxR17 and probable spontaneous re-oxidation, results in overall deoxygenation to chrysophanol. Baeyer-Villiger oxidation by the Baeyer-Villiger monooxygenase (BVMO) dmxR6 then yields monodictylactone in equilibrium with monodictyphenone. In the case of the cryptosporioptides biosynthesis, monodictylactone is reduced at C-12 to an alcohol (by the short chain dehydrogenases dmxR12 or dmxR8) and hydroxylated at C-5 by dmxR9, yielding the electron-rich aromatic which could eliminate H(2)O to form the ortho-quinonemethide, followed by tautomerisation to paraquinone and complete the formal reduction to produce the 10-methylgroup. Conjugate addition of C-4a-OH to the resulting paraquinone by the monooxygenase dmxR10 then gives cyclohexadienone, which is then reduced at C-5 by the short chain dehydrogenase dmxR3 to give the dihydroxanthone. The 6,7-epoxide in the cryptosporioptides could be introduced by the cytochrome P450 monooxygenase dmxL3. The highly reducing PKS dmxL2 manufactures butyrate, which is further carboxylated by dmxL1 to form ethylmalonate. It is not yet clear whether the carboxylation occurs while the butyrate is attached to the ACP of dmxL2, but this unusual fungal metabolite could then be esterified to O-5 by the O-acetyltransferase dmxR13. Finally, dimerization performed by dmxR5 gives the observed dimers cryptosporioptides A, B and C as the final products of the pathway. The sequence is that of Acetyl-CoA carboxylase dmxL1 from Cryptosporiopsis sp. (strain 8999).